The sequence spans 457 residues: G-protein coupled receptor 135 (457 aa).

The disordered stretch occupies residues 1 to 27 (MEEQARPPSRPAASATLPGSAHPGGAA). Over 1 to 64 (MEEQARPPSR…EAAGSRGPAP (64 aa)) the chain is Extracellular. A glycan (N-linked (GlcNAc...) asparagine) is linked at asparagine 47. The chain crosses the membrane as a helical span at residues 65–85 (LLWHGAAVAAQALVLLLIFLL). The Cytoplasmic portion of the chain corresponds to 86 to 109 (SSLGNCAVMGVIVKHRQLRTVTNA). The helical transmembrane segment at 110-130 (FILSLSLSDLLTALLCLPAAF) threads the bilayer. Over 131 to 156 (LDLFAPPGDSGPWRSFCAASRFFSSC) the chain is Extracellular. A helical transmembrane segment spans residues 157–177 (FGIVSTFSVALISLDRYCAIV). The Cytoplasmic segment spans residues 178–189 (RPPRDKLGRRRA). A helical membrane pass occupies residues 190-210 (LQLLAGAWLAALGFSLPWELL). Over 211–235 (RAPREPPTPQSFHRCLYRTSPDPAQ) the chain is Extracellular. The chain crosses the membrane as a helical span at residues 236 to 256 (LGAAYSVGLVVACYLLPFLLM). Residues 257–295 (CFCRYHICKTVRLSDVRVRPMTTYARVLRFFSEVRTATT) are Cytoplasmic-facing. A helical membrane pass occupies residues 296-316 (VLIMIVFVICCWGPYCFLVLL). Over 317 to 329 (AATRQGQTTQAPS) the chain is Extracellular. The chain crosses the membrane as a helical span at residues 330–350 (LLNVAAVWLTWANGAINPVIY). The Cytoplasmic portion of the chain corresponds to 351 to 457 (AIRNPNISMF…HKSETRDSSI (107 aa)).

Belongs to the G-protein coupled receptor 1 family. In terms of assembly, interacts with MTNR1B. Interacts with ARRB1 and ARRB2 in a spontaneous and agonist-independent manner; leading to the internalization of GPR135 in the endosomal compartment.

Its subcellular location is the cell membrane. It is found in the endosome membrane. Functionally, orphan receptor. Has spontaneous activity for beta-arrestin recruitment. Shows a reciprocal regulatory interaction with the melatonin receptor MTNR1B most likely through receptor heteromerization. This is G-protein coupled receptor 135 (Gpr135) from Rattus norvegicus (Rat).